Reading from the N-terminus, the 370-residue chain is Chaperone protein DnaJ (370 aa).

One can recognise a J domain in the interval 6–70; that stretch reads DFYEILGVSK…QKRANYDQFG (65 aa). Residues 134 to 216 form a CR-type zinc finger; that stretch reads GANKSVTLNV…CHGKGFNTKR (83 aa). Zn(2+)-binding residues include Cys147, Cys150, Cys164, Cys167, Cys190, Cys193, Cys204, and Cys207. 4 CXXCXGXG motif repeats span residues 147-154, 164-171, 190-197, and 204-211; these read CTSCHGSG, CSRCGGTG, CPDCGGSG, and CGECHGKG.

It belongs to the DnaJ family. In terms of assembly, homodimer. Zn(2+) is required as a cofactor.

It is found in the cytoplasm. In terms of biological role, participates actively in the response to hyperosmotic and heat shock by preventing the aggregation of stress-denatured proteins and by disaggregating proteins, also in an autonomous, DnaK-independent fashion. Unfolded proteins bind initially to DnaJ; upon interaction with the DnaJ-bound protein, DnaK hydrolyzes its bound ATP, resulting in the formation of a stable complex. GrpE releases ADP from DnaK; ATP binding to DnaK triggers the release of the substrate protein, thus completing the reaction cycle. Several rounds of ATP-dependent interactions between DnaJ, DnaK and GrpE are required for fully efficient folding. Also involved, together with DnaK and GrpE, in the DNA replication of plasmids through activation of initiation proteins. This chain is Chaperone protein DnaJ, found in Erysipelothrix rhusiopathiae.